The primary structure comprises 270 residues: Putative serine acetyltransferase (270 aa).

The protein belongs to the transferase hexapeptide repeat family.

Its subcellular location is the cytoplasm. It is found in the nucleus. It carries out the reaction L-serine + acetyl-CoA = O-acetyl-L-serine + CoA. Its pathway is amino-acid biosynthesis; L-cysteine biosynthesis; L-cysteine from L-serine: step 1/2. The chain is Putative serine acetyltransferase from Schizosaccharomyces pombe (strain 972 / ATCC 24843) (Fission yeast).